We begin with the raw amino-acid sequence, 426 residues long: Dihydroorotase (426 aa).

Zn(2+) contacts are provided by His-61 and His-63. Residues 63–65 and Asn-95 each bind substrate; that span reads HCR. 4 residues coordinate Zn(2+): Glu-146, His-180, His-229, and Asp-297. Residue Asp-297 is part of the active site. Substrate is bound at residue His-301.

This sequence belongs to the metallo-dependent hydrolases superfamily. DHOase family. Class I DHOase subfamily. The cofactor is Zn(2+).

The enzyme catalyses (S)-dihydroorotate + H2O = N-carbamoyl-L-aspartate + H(+). The protein operates within pyrimidine metabolism; UMP biosynthesis via de novo pathway; (S)-dihydroorotate from bicarbonate: step 3/3. In terms of biological role, catalyzes the reversible cyclization of carbamoyl aspartate to dihydroorotate. This chain is Dihydroorotase, found in Methanopyrus kandleri (strain AV19 / DSM 6324 / JCM 9639 / NBRC 100938).